We begin with the raw amino-acid sequence, 182 residues long: Kappa-casein (182 aa).

A signal peptide spans Met-1–Val-20. 4 O-linked (GalNAc...) threonine glycosylation sites follow: Thr-133, Thr-143, Thr-148, and Thr-151. Position 157 is a phosphothreonine; alternate (Thr-157). O-linked (GalNAc...) threonine; alternate glycosylation occurs at Thr-157. Residues Thr-167, Thr-169, and Thr-178 are each glycosylated (O-linked (GalNAc...) threonine).

The protein belongs to the kappa-casein family. As to quaternary structure, heteromultimers composed of alpha-s1 casein and kappa casein linked by disulfide bonds. Post-translationally, the N-terminus is blocked. As to expression, mammary gland specific. Secreted in milk.

The protein resides in the secreted. Its function is as follows. Kappa-casein stabilizes micelle formation, preventing casein precipitation in milk. This is Kappa-casein (CSN3) from Homo sapiens (Human).